The primary structure comprises 498 residues: ATP synthase subunit beta, chloroplastic (498 aa).

172 to 179 (GGAGVGKT) is an ATP binding site.

Belongs to the ATPase alpha/beta chains family. F-type ATPases have 2 components, CF(1) - the catalytic core - and CF(0) - the membrane proton channel. CF(1) has five subunits: alpha(3), beta(3), gamma(1), delta(1), epsilon(1). CF(0) has four main subunits: a(1), b(1), b'(1) and c(9-12).

Its subcellular location is the plastid. It localises to the chloroplast thylakoid membrane. The catalysed reaction is ATP + H2O + 4 H(+)(in) = ADP + phosphate + 5 H(+)(out). Its function is as follows. Produces ATP from ADP in the presence of a proton gradient across the membrane. The catalytic sites are hosted primarily by the beta subunits. This Vitis vinifera (Grape) protein is ATP synthase subunit beta, chloroplastic.